The chain runs to 249 residues: tRNA (guanine-N(1)-)-methyltransferase (249 aa).

Residues Gly113 and 133–138 (IGDFVL) each bind S-adenosyl-L-methionine.

This sequence belongs to the RNA methyltransferase TrmD family. Homodimer.

The protein localises to the cytoplasm. The enzyme catalyses guanosine(37) in tRNA + S-adenosyl-L-methionine = N(1)-methylguanosine(37) in tRNA + S-adenosyl-L-homocysteine + H(+). Functionally, specifically methylates guanosine-37 in various tRNAs. The polypeptide is tRNA (guanine-N(1)-)-methyltransferase (Photobacterium profundum (strain SS9)).